Consider the following 187-residue polypeptide: Ribosome maturation factor RimM (187 aa).

Residues 96–169 (EDEFFYADLE…KLVIDPTAAG (74 aa)) enclose the PRC barrel domain.

This sequence belongs to the RimM family. Binds ribosomal protein uS19.

The protein resides in the cytoplasm. Functionally, an accessory protein needed during the final step in the assembly of 30S ribosomal subunit, possibly for assembly of the head region. Essential for efficient processing of 16S rRNA. May be needed both before and after RbfA during the maturation of 16S rRNA. It has affinity for free ribosomal 30S subunits but not for 70S ribosomes. The protein is Ribosome maturation factor RimM of Rhizobium meliloti (strain 1021) (Ensifer meliloti).